Reading from the N-terminus, the 412-residue chain is DNA polymerase IV 2 (412 aa).

The UmuC domain occupies 7 to 192; sequence IFLVDMQSFY…LPVGSMFGVG (186 aa). Aspartate 11 and aspartate 107 together coordinate Mg(2+). Glutamate 108 is a catalytic residue.

This sequence belongs to the DNA polymerase type-Y family. As to quaternary structure, monomer. Requires Mg(2+) as cofactor.

It is found in the cytoplasm. It catalyses the reaction DNA(n) + a 2'-deoxyribonucleoside 5'-triphosphate = DNA(n+1) + diphosphate. Functionally, poorly processive, error-prone DNA polymerase involved in untargeted mutagenesis. Copies undamaged DNA at stalled replication forks, which arise in vivo from mismatched or misaligned primer ends. These misaligned primers can be extended by PolIV. Exhibits no 3'-5' exonuclease (proofreading) activity. May be involved in translesion synthesis (TSL), in conjunction with the beta clamp from PolIII. The sequence is that of DNA polymerase IV 2 (dinB2) from Bacillus subtilis (strain 168).